Consider the following 787-residue polypeptide: LPS-assembly protein LptD (787 aa).

A signal peptide spans 1-39; the sequence is MPPKTLFPLVPACDAAPRKKRLAVALLAVPGLVPAVSQA.

Belongs to the LptD family. Component of the lipopolysaccharide transport and assembly complex. Interacts with LptE and LptA.

The protein resides in the cell outer membrane. Together with LptE, is involved in the assembly of lipopolysaccharide (LPS) at the surface of the outer membrane. This Burkholderia pseudomallei (strain 1710b) protein is LPS-assembly protein LptD.